A 134-amino-acid polypeptide reads, in one-letter code: Ribosome-binding factor A (134 aa).

The tract at residues 115 to 134 (EDQRQERGEIPPGSDELQPD) is disordered.

This sequence belongs to the RbfA family. In terms of assembly, monomer. Binds 30S ribosomal subunits, but not 50S ribosomal subunits or 70S ribosomes.

It localises to the cytoplasm. Functionally, one of several proteins that assist in the late maturation steps of the functional core of the 30S ribosomal subunit. Associates with free 30S ribosomal subunits (but not with 30S subunits that are part of 70S ribosomes or polysomes). Required for efficient processing of 16S rRNA. May interact with the 5'-terminal helix region of 16S rRNA. The polypeptide is Ribosome-binding factor A (Synechococcus sp. (strain CC9902)).